We begin with the raw amino-acid sequence, 488 residues long: uncharacterized protein (488 aa).

It belongs to the protein kinase superfamily. ADCK protein kinase family.

This is an uncharacterized protein from Mycobacterium tuberculosis (strain CDC 1551 / Oshkosh).